The primary structure comprises 174 residues: Shikimate kinase (174 aa).

10–15 provides a ligand contact to ATP; that stretch reads GSGKTA. Thr-14 provides a ligand contact to Mg(2+). Residues Asp-32, Arg-56, and Gly-78 each contribute to the substrate site. An ATP-binding site is contributed by Arg-118. Arg-137 is a binding site for substrate. Arg-154 serves as a coordination point for ATP.

The protein belongs to the shikimate kinase family. In terms of assembly, monomer. It depends on Mg(2+) as a cofactor.

The protein localises to the cytoplasm. The catalysed reaction is shikimate + ATP = 3-phosphoshikimate + ADP + H(+). Its pathway is metabolic intermediate biosynthesis; chorismate biosynthesis; chorismate from D-erythrose 4-phosphate and phosphoenolpyruvate: step 5/7. In terms of biological role, catalyzes the specific phosphorylation of the 3-hydroxyl group of shikimic acid using ATP as a cosubstrate. This chain is Shikimate kinase, found in Symbiobacterium thermophilum (strain DSM 24528 / JCM 14929 / IAM 14863 / T).